A 310-amino-acid chain; its full sequence is Methionyl-tRNA formyltransferase (310 aa).

Residue serine 109 to proline 112 coordinates (6S)-5,6,7,8-tetrahydrofolate.

Belongs to the Fmt family.

The catalysed reaction is L-methionyl-tRNA(fMet) + (6R)-10-formyltetrahydrofolate = N-formyl-L-methionyl-tRNA(fMet) + (6S)-5,6,7,8-tetrahydrofolate + H(+). Attaches a formyl group to the free amino group of methionyl-tRNA(fMet). The formyl group appears to play a dual role in the initiator identity of N-formylmethionyl-tRNA by promoting its recognition by IF2 and preventing the misappropriation of this tRNA by the elongation apparatus. This Pseudomonas putida (strain GB-1) protein is Methionyl-tRNA formyltransferase.